We begin with the raw amino-acid sequence, 323 residues long: Elongation factor P--(R)-beta-lysine ligase (323 aa).

76 to 78 is a binding site for substrate; it reads SPE. Residues 100 to 102 and Asn-109 each bind ATP; that span reads RNE. Position 118 (Tyr-118) interacts with substrate. An ATP-binding site is contributed by 242–243; it reads EL. Glu-249 provides a ligand contact to substrate. Residue Gly-298 coordinates ATP.

Belongs to the class-II aminoacyl-tRNA synthetase family. EpmA subfamily. As to quaternary structure, homodimer.

It catalyses the reaction D-beta-lysine + L-lysyl-[protein] + ATP = N(6)-((3R)-3,6-diaminohexanoyl)-L-lysyl-[protein] + AMP + diphosphate + H(+). With EpmB is involved in the beta-lysylation step of the post-translational modification of translation elongation factor P (EF-P). Catalyzes the ATP-dependent activation of (R)-beta-lysine produced by EpmB, forming a lysyl-adenylate, from which the beta-lysyl moiety is then transferred to the epsilon-amino group of a conserved specific lysine residue in EF-P. The chain is Elongation factor P--(R)-beta-lysine ligase from Haemophilus influenzae (strain ATCC 51907 / DSM 11121 / KW20 / Rd).